We begin with the raw amino-acid sequence, 259 residues long: Triosephosphate isomerase (259 aa).

A substrate-binding site is contributed by 10 to 12 (NWK). H102 (electrophile) is an active-site residue. The Proton acceptor role is filled by E172. Substrate-binding positions include G178, S218, and 239-240 (GG).

It belongs to the triosephosphate isomerase family. As to quaternary structure, homodimer.

It localises to the cytoplasm. It catalyses the reaction D-glyceraldehyde 3-phosphate = dihydroxyacetone phosphate. The protein operates within carbohydrate biosynthesis; gluconeogenesis. It functions in the pathway carbohydrate degradation; glycolysis; D-glyceraldehyde 3-phosphate from glycerone phosphate: step 1/1. Functionally, involved in the gluconeogenesis. Catalyzes stereospecifically the conversion of dihydroxyacetone phosphate (DHAP) to D-glyceraldehyde-3-phosphate (G3P). The polypeptide is Triosephosphate isomerase (Leifsonia xyli subsp. xyli (strain CTCB07)).